Here is a 311-residue protein sequence, read N- to C-terminus: Porphobilinogen deaminase (311 aa).

Cys242 bears the S-(dipyrrolylmethanemethyl)cysteine mark.

The protein belongs to the HMBS family. Monomer. Dipyrromethane serves as cofactor.

It carries out the reaction 4 porphobilinogen + H2O = hydroxymethylbilane + 4 NH4(+). It functions in the pathway porphyrin-containing compound metabolism; protoporphyrin-IX biosynthesis; coproporphyrinogen-III from 5-aminolevulinate: step 2/4. In terms of biological role, tetrapolymerization of the monopyrrole PBG into the hydroxymethylbilane pre-uroporphyrinogen in several discrete steps. The protein is Porphobilinogen deaminase (hemC) of Vibrio cholerae serotype O1 (strain ATCC 39315 / El Tor Inaba N16961).